A 263-amino-acid chain; its full sequence is Small ribosomal subunit protein eS4 (263 aa).

The S4 RNA-binding domain maps to 42–105 (LPLIIFLRNR…GENFRLIYDV (64 aa)).

The protein belongs to the eukaryotic ribosomal protein eS4 family. Component of the small ribosomal subunit. Part of the small subunit (SSU) processome, composed of more than 70 proteins and the RNA chaperone small nucleolar RNA (snoRNA) U3.

It localises to the cytoplasm. It is found in the nucleus. The protein resides in the nucleolus. Its function is as follows. Component of the small ribosomal subunit. The ribosome is a large ribonucleoprotein complex responsible for the synthesis of proteins in the cell. Part of the small subunit (SSU) processome, first precursor of the small eukaryotic ribosomal subunit. During the assembly of the SSU processome in the nucleolus, many ribosome biogenesis factors, an RNA chaperone and ribosomal proteins associate with the nascent pre-rRNA and work in concert to generate RNA folding, modifications, rearrangements and cleavage as well as targeted degradation of pre-ribosomal RNA by the RNA exosome. The protein is Small ribosomal subunit protein eS4 (rps4x) of Danio rerio (Zebrafish).